A 248-amino-acid polypeptide reads, in one-letter code: Triosephosphate isomerase (248 aa).

11 to 13 (NWK) provides a ligand contact to substrate. The active-site Electrophile is His95. The Proton acceptor role is filled by Glu167. Substrate contacts are provided by residues Gly173, Ser212, and 233 to 234 (GG).

Belongs to the triosephosphate isomerase family. As to quaternary structure, homodimer.

The protein resides in the cytoplasm. It carries out the reaction D-glyceraldehyde 3-phosphate = dihydroxyacetone phosphate. It functions in the pathway carbohydrate biosynthesis; gluconeogenesis. It participates in carbohydrate degradation; glycolysis; D-glyceraldehyde 3-phosphate from glycerone phosphate: step 1/1. Involved in the gluconeogenesis. Catalyzes stereospecifically the conversion of dihydroxyacetone phosphate (DHAP) to D-glyceraldehyde-3-phosphate (G3P). The sequence is that of Triosephosphate isomerase from Ralstonia nicotianae (strain ATCC BAA-1114 / GMI1000) (Ralstonia solanacearum).